The chain runs to 542 residues: CTP synthase (542 aa).

An amidoligase domain region spans residues 1–265 (MARYVFITGG…DSEVLSAFGI (265 aa)). S13 serves as a coordination point for CTP. Residue S13 coordinates UTP. 14–19 (SLGKGI) is an ATP binding site. L-glutamine is bound at residue Y54. An ATP-binding site is contributed by D71. 2 residues coordinate Mg(2+): D71 and E139. Residues 146–148 (DIE), 186–191 (KTKPTQ), and K222 contribute to the CTP site. Residues 186–191 (KTKPTQ) and K222 each bind UTP. The 251-residue stretch at 291–541 (TIAVVGKYTG…IEAAIEQSRL (251 aa)) folds into the Glutamine amidotransferase type-1 domain. G353 serves as a coordination point for L-glutamine. The Nucleophile; for glutamine hydrolysis role is filled by C380. Residues 381–384 (FGMQ), E404, and R469 each bind L-glutamine. Active-site residues include H514 and E516.

It belongs to the CTP synthase family. As to quaternary structure, homotetramer.

It catalyses the reaction UTP + L-glutamine + ATP + H2O = CTP + L-glutamate + ADP + phosphate + 2 H(+). It carries out the reaction L-glutamine + H2O = L-glutamate + NH4(+). The catalysed reaction is UTP + NH4(+) + ATP = CTP + ADP + phosphate + 2 H(+). It participates in pyrimidine metabolism; CTP biosynthesis via de novo pathway; CTP from UDP: step 2/2. Its activity is regulated as follows. Allosterically activated by GTP, when glutamine is the substrate; GTP has no effect on the reaction when ammonia is the substrate. The allosteric effector GTP functions by stabilizing the protein conformation that binds the tetrahedral intermediate(s) formed during glutamine hydrolysis. Inhibited by the product CTP, via allosteric rather than competitive inhibition. Its function is as follows. Catalyzes the ATP-dependent amination of UTP to CTP with either L-glutamine or ammonia as the source of nitrogen. Regulates intracellular CTP levels through interactions with the four ribonucleotide triphosphates. The polypeptide is CTP synthase (Brucella melitensis biotype 1 (strain ATCC 23456 / CCUG 17765 / NCTC 10094 / 16M)).